The primary structure comprises 206 residues: ATP-dependent Clp protease proteolytic subunit (206 aa).

The active-site Nucleophile is S108. The active site involves H133.

It belongs to the peptidase S14 family. In terms of assembly, fourteen ClpP subunits assemble into 2 heptameric rings which stack back to back to give a disk-like structure with a central cavity, resembling the structure of eukaryotic proteasomes.

Its subcellular location is the cytoplasm. The catalysed reaction is Hydrolysis of proteins to small peptides in the presence of ATP and magnesium. alpha-casein is the usual test substrate. In the absence of ATP, only oligopeptides shorter than five residues are hydrolyzed (such as succinyl-Leu-Tyr-|-NHMec, and Leu-Tyr-Leu-|-Tyr-Trp, in which cleavage of the -Tyr-|-Leu- and -Tyr-|-Trp bonds also occurs).. Functionally, cleaves peptides in various proteins in a process that requires ATP hydrolysis. Has a chymotrypsin-like activity. Plays a major role in the degradation of misfolded proteins. This Chromohalobacter salexigens (strain ATCC BAA-138 / DSM 3043 / CIP 106854 / NCIMB 13768 / 1H11) protein is ATP-dependent Clp protease proteolytic subunit.